The chain runs to 485 residues: Metalloprotease AprA (485 aa).

His187 is a binding site for Zn(2+). Glu188 is a catalytic residue. Zn(2+) is bound by residues His191 and His197. Ca(2+)-binding residues include Arg268, Gly270, Thr272, Asp300, Gly302, Gly303, Asp305, Thr342, Glu344, Gly349, Gly351, Asp353, Asn358, Leu360, Asn362, Gly366, Gly367, Ala368, Gly369, Asp371, Gly375, Gly376, Gly377, Gly378, Asp380, Gly384, Gly385, Thr386, Gly387, Asp389, Asp398, Asp405, Asp415, Asp461, Thr463, Asn465, Ser467, and Asp469. 3 Hemolysin-type calcium-binding repeats span residues 347-364 (FGGSGNDLLIGNALANVL), 365-382 (KGGAGNDIIYGGGGADQL), and 383-395 (WGGTGADTFVFGA).

The protein belongs to the peptidase M10B family. The cofactor is Ca(2+). Zn(2+) is required as a cofactor.

The protein localises to the secreted. Its function is as follows. Secreted protease which is important for P.entomophila to counteract the local immune response of Drosophila. Can degrade antimicrobial peptides (AMPs), e.g. Diptericin and Cecropin A. Thus, protects P.entomophila from the Drosophila antimicrobial peptides produced by the gut innate immune response, and promotes bacterial persistence in the Drosophila gut and killing of the host. Is responsible for maturation of pro-Monalysin to the active toxin Monalysin, by cleaving its N-terminus. In Pseudomonas entomophila (strain L48), this protein is Metalloprotease AprA.